The primary structure comprises 574 residues: Proline--tRNA ligase (574 aa).

It belongs to the class-II aminoacyl-tRNA synthetase family. ProS type 1 subfamily. As to quaternary structure, homodimer.

It is found in the cytoplasm. The catalysed reaction is tRNA(Pro) + L-proline + ATP = L-prolyl-tRNA(Pro) + AMP + diphosphate. In terms of biological role, catalyzes the attachment of proline to tRNA(Pro) in a two-step reaction: proline is first activated by ATP to form Pro-AMP and then transferred to the acceptor end of tRNA(Pro). As ProRS can inadvertently accommodate and process non-cognate amino acids such as alanine and cysteine, to avoid such errors it has two additional distinct editing activities against alanine. One activity is designated as 'pretransfer' editing and involves the tRNA(Pro)-independent hydrolysis of activated Ala-AMP. The other activity is designated 'posttransfer' editing and involves deacylation of mischarged Ala-tRNA(Pro). The misacylated Cys-tRNA(Pro) is not edited by ProRS. The protein is Proline--tRNA ligase of Marinomonas sp. (strain MWYL1).